A 430-amino-acid polypeptide reads, in one-letter code: Palmitoyltransferase ZDHHC11 (430 aa).

Topologically, residues 1–46 (MTNLNCFGRHRRRTAPHNATGSRSELVAPPIHSRINGWSSPLHSFQ) are cytoplasmic. The chain crosses the membrane as a helical span at residues 47–67 (FIALLIFSFMAIVAFGIYVPL). Residues 68-76 (LPAPWSYAA) are Lumenal-facing. The chain crosses the membrane as a helical span at residues 77–97 (YALIGSAFVLHLFSHVTAVTI). The Cytoplasmic portion of the chain corresponds to 98–176 (DPADVNVRRR…GGRNYWFFFT (79 aa)). The 51-residue stretch at 129 to 179 (LHCTLCEVDVSPKAKHCSTCNKCIADFDHHCKWLNNCVGGRNYWFFFTAVS) folds into the DHHC domain. Cys159 serves as the catalytic S-palmitoyl cysteine intermediate. A helical transmembrane segment spans residues 177-197 (AVSSAVIGVILLIPLVLFVFI). Residues 198–234 (EHYVNPAVLRTAPQFQTVKGNGTWLVFLPVAPVETSS) are Lumenal-facing. A helical transmembrane segment spans residues 235 to 255 (ISLLVVSFITALLSLAALLLL). The Cytoplasmic segment spans residues 256–430 (CHLLCFHIYL…QYLHFKQKMP (175 aa)).

It belongs to the DHHC palmitoyltransferase family.

It localises to the endoplasmic reticulum membrane. The enzyme catalyses L-cysteinyl-[protein] + hexadecanoyl-CoA = S-hexadecanoyl-L-cysteinyl-[protein] + CoA. Functionally, endoplasmic reticulum-localized palmitoyltransferase that could catalyze the addition of palmitate onto protein substrates. This chain is Palmitoyltransferase ZDHHC11, found in Danio rerio (Zebrafish).